Here is a 537-residue protein sequence, read N- to C-terminus: Phosphoenolpyruvate carboxykinase (ATP) (537 aa).

Residues arginine 61, tyrosine 195, and lysine 201 each coordinate substrate. Residues lysine 201, histidine 220, and 236 to 244 (GLSGTGKTT) each bind ATP. Lysine 201 and histidine 220 together coordinate Mn(2+). Aspartate 257 provides a ligand contact to Mn(2+). 3 residues coordinate ATP: glutamate 285, arginine 323, and threonine 448. Residue arginine 323 coordinates substrate.

This sequence belongs to the phosphoenolpyruvate carboxykinase (ATP) family. Requires Mn(2+) as cofactor.

It localises to the cytoplasm. The catalysed reaction is oxaloacetate + ATP = phosphoenolpyruvate + ADP + CO2. It participates in carbohydrate biosynthesis; gluconeogenesis. In terms of biological role, involved in the gluconeogenesis. Catalyzes the conversion of oxaloacetate (OAA) to phosphoenolpyruvate (PEP) through direct phosphoryl transfer between the nucleoside triphosphate and OAA. In Parvibaculum lavamentivorans (strain DS-1 / DSM 13023 / NCIMB 13966), this protein is Phosphoenolpyruvate carboxykinase (ATP).